A 556-amino-acid chain; its full sequence is Bifunctional methyltransferase (556 aa).

Positions 1-310 (MQYSIQKFLN…NRVIEISLIQ (310 aa)) are RF MTase. Residues 148–152 (GTGSG), D171, W200, and N215 contribute to the S-adenosyl-L-methionine site. Substrate is bound at residue 215-218 (NPPY). The interval 313-556 (RSYARRIGKS…IITKIPPKSY (244 aa)) is tRNA MTase. The segment at 348-399 (KNYNSCKIKSNYTKFNLEKSKESVSRGAERIKIREHLRTYKEDVANFSSSTS) is insert. S-adenosyl-L-methionine-binding residues include E403, E428, N455, and D477. Residue D477 is part of the active site. Substrate is bound by residues K481 and D513.

This sequence in the C-terminal section; belongs to the class I-like SAM-binding methyltransferase superfamily. TrmB family. It in the N-terminal section; belongs to the protein N5-glutamine methyltransferase family. PrmC subfamily.

The enzyme catalyses L-glutaminyl-[peptide chain release factor] + S-adenosyl-L-methionine = N(5)-methyl-L-glutaminyl-[peptide chain release factor] + S-adenosyl-L-homocysteine + H(+). The catalysed reaction is guanosine(46) in tRNA + S-adenosyl-L-methionine = N(7)-methylguanosine(46) in tRNA + S-adenosyl-L-homocysteine. Functionally, methylates the class 1 translation termination release factors RF1/PrfA and RF2/PrfB on the glutamine residue of the universally conserved GGQ motif. In terms of biological role, catalyzes the formation of N(7)-methylguanine at position 46 (m7G46) in tRNA. The polypeptide is Bifunctional methyltransferase (prmC/trmB) (Rickettsia bellii (strain RML369-C)).